We begin with the raw amino-acid sequence, 417 residues long: UDP-N-acetylglucosamine 1-carboxyvinyltransferase (417 aa).

A phosphoenolpyruvate-binding site is contributed by 22 to 23; the sequence is KN. Arg92 provides a ligand contact to UDP-N-acetyl-alpha-D-glucosamine. Cys116 (proton donor) is an active-site residue. A 2-(S-cysteinyl)pyruvic acid O-phosphothioketal modification is found at Cys116. Positions 304 and 326 each coordinate UDP-N-acetyl-alpha-D-glucosamine.

Belongs to the EPSP synthase family. MurA subfamily.

It localises to the cytoplasm. It carries out the reaction phosphoenolpyruvate + UDP-N-acetyl-alpha-D-glucosamine = UDP-N-acetyl-3-O-(1-carboxyvinyl)-alpha-D-glucosamine + phosphate. The protein operates within cell wall biogenesis; peptidoglycan biosynthesis. Its function is as follows. Cell wall formation. Adds enolpyruvyl to UDP-N-acetylglucosamine. The sequence is that of UDP-N-acetylglucosamine 1-carboxyvinyltransferase from Syntrophotalea carbinolica (strain DSM 2380 / NBRC 103641 / GraBd1) (Pelobacter carbinolicus).